A 295-amino-acid polypeptide reads, in one-letter code: Bifunctional protein FolD (295 aa).

Residues 166–168, Ser-191, and Ile-232 each bind NADP(+); that span reads GRS.

Belongs to the tetrahydrofolate dehydrogenase/cyclohydrolase family. Homodimer.

The enzyme catalyses (6R)-5,10-methylene-5,6,7,8-tetrahydrofolate + NADP(+) = (6R)-5,10-methenyltetrahydrofolate + NADPH. It carries out the reaction (6R)-5,10-methenyltetrahydrofolate + H2O = (6R)-10-formyltetrahydrofolate + H(+). It functions in the pathway one-carbon metabolism; tetrahydrofolate interconversion. Catalyzes the oxidation of 5,10-methylenetetrahydrofolate to 5,10-methenyltetrahydrofolate and then the hydrolysis of 5,10-methenyltetrahydrofolate to 10-formyltetrahydrofolate. This Rhodopseudomonas palustris (strain ATCC BAA-98 / CGA009) protein is Bifunctional protein FolD.